Here is a 268-residue protein sequence, read N- to C-terminus: MAKAGENSRDKSRWSLEGMTALVTGGSKGLGEAVVEELAMLGARVHTCARDETQLQERLREWQAKGFEVTTSVCDVSSREQREKLMETVSSVFQGKLNILVNNAGTGIIKPSTEYTAEDYSFLMATNLESAFHLSQIAHPLLKASGSGSIVFMSSVAGLVHTGASIYGASKGAMNQLGRSLACEWASDNIRVNSVCPWVITTPLTSFIFSDEKLRKAVEDKTPMGRVGEANEVSSLVAFLCFPAASYITGQTICVDGGASVNGFSFKP.

Position 22-46 (L22–H46) interacts with NADP(+). Residue S155 participates in substrate binding. Y167 acts as the Proton acceptor in catalysis.

It belongs to the short-chain dehydrogenases/reductases (SDR) family. SDR65C subfamily.

Enantiospecific reductase active on cyclic monoterpenes and small flexible lipophilic carbonyls. No activity with tropinone, nitrogen-containing tropinone analogs, tropine or pseudotropine as substrate. This is Tropinone reductase homolog At2g29150 from Arabidopsis thaliana (Mouse-ear cress).